The sequence spans 136 residues: Large ribosomal subunit protein eL27 (136 aa).

The region spanning 5-36 is the KOW domain; it reads MKPGKVVLVLRGKYAGRKAVVVKQQDEGVSDR.

This sequence belongs to the eukaryotic ribosomal protein eL27 family. Component of the large ribosomal subunit.

The protein resides in the cytoplasm. It is found in the cytosol. The protein localises to the rough endoplasmic reticulum. Component of the large ribosomal subunit. The chain is Large ribosomal subunit protein eL27 (rpl-27) from Caenorhabditis elegans.